We begin with the raw amino-acid sequence, 113 residues long: U11-theraphotoxin-Hhn1a (113 aa).

Positions 1-21 (MNTVRVTFLLVFVLPVSLGQA) are cleaved as a signal peptide. A propeptide spanning residues 22–74 (DKDENRMEMQEKTEQGKSYLDFAENLLLQKLEELEAKLLEEDSEESRNSRQKR) is cleaved from the precursor. Basic and acidic residues predominate over residues 60 to 69 (LEEDSEESRN). A disordered region spans residues 60–83 (LEEDSEESRNSRQKRCIGEGVPCD). 3 cysteine pairs are disulfide-bonded: Cys-75–Cys-90, Cys-82–Cys-95, and Cys-89–Cys-110.

It belongs to the neurotoxin 14 (magi-1) family. 01 (HNTX-16) subfamily. Expressed by the venom gland.

It localises to the secreted. In terms of biological role, probable ion channel inhibitor. The protein is U11-theraphotoxin-Hhn1a of Cyriopagopus hainanus (Chinese bird spider).